The following is a 1336-amino-acid chain: Mating factor M secretion protein mam1 (1336 aa).

The interval 1–29 (MHIHSDLSLPQFEHASIDPPSYSPQKSSF) is disordered. Residues 1–91 (MHIHSDLSLP…ELAGVSSWSD (91 aa)) are Cytoplasmic-facing. The helical transmembrane segment at 92–112 (FFYLFHFSDIPLIFGTLIFTC) threads the bilayer. Positions 104 to 396 (IFGTLIFTCL…ILPAIPDLIK (293 aa)) constitute an ABC transmembrane type-1 1 domain. Residues 113 to 153 (LSAALEPLMTWTTGKVFDALSQYATSQITLGKMISLINFNS) are Extracellular-facing. Residues 154-174 (LLITIFGLASCVFSFGVRFLW) form a helical membrane-spanning segment. Topologically, residues 175–250 (QYLSAIAGKR…SCLIISFRYS (76 aa)) are cytoplasmic. The helical transmembrane segment at 251–271 (WSLTLVVLASYPIIILVVGFI) threads the bilayer. Over 272-778 (NSFLSSAYEK…KSIWKVKKLR (507 aa)) the chain is Extracellular. Positions 433 to 668 (FRFDNVSFAY…EDFENNVSID (236 aa)) constitute an ABC transporter 1 domain. 2 N-linked (GlcNAc...) asparagine glycosylation sites follow: Asn-437 and Asn-454. 469-476 (GPSGSGKS) is a binding site for ATP. 3 N-linked (GlcNAc...) asparagine glycosylation sites follow: Asn-536, Asn-664, and Asn-697. Residues 779–799 (WFFLLGLLTSLIQGASVPIFA) traverse the membrane as a helical segment. In terms of domain architecture, ABC transmembrane type-1 2 spans 781–1066 (FLLGLLTSLI…CIMSLPNVSA (286 aa)). The Cytoplasmic portion of the chain corresponds to 800–897 (YVISKCLNLF…ISDMRNMISS (98 aa)). The helical transmembrane segment at 898-918 (LIEEVFIAFTMAIIGIAWSFA) threads the bilayer. Residues 919-1336 (TGWRLAAVLV…KLIHRGEWIE (418 aa)) are Extracellular-facing. Residues Asn-1011, Asn-1063, and Asn-1120 are each glycosylated (N-linked (GlcNAc...) asparagine). An ABC transporter 2 domain is found at 1099-1331 (IEFDGVSFAY…HTHFWKLIHR (233 aa)). 1135-1142 (GISGSGKS) provides a ligand contact to ATP. Asn-1235 and Asn-1280 each carry an N-linked (GlcNAc...) asparagine glycan.

Belongs to the ABC transporter superfamily. Alpha-factor sex pheromone exporter (TC 3.A.1.206) family.

The protein resides in the membrane. In terms of biological role, required in S.pombe M (minus) cells for production of M-factor pheromone. Involved in the transport of the farnesyl-derivation of the M-factor pheromone. This Schizosaccharomyces pombe (strain 972 / ATCC 24843) (Fission yeast) protein is Mating factor M secretion protein mam1 (mam1).